We begin with the raw amino-acid sequence, 165 residues long: S-(2-succino)cysteine N-acetyltransferase (165 aa).

In terms of domain architecture, N-acetyltransferase spans 3–162 (PRYRLAVERD…ITVYMKKQLR (160 aa)).

Belongs to the acetyltransferase family.

The catalysed reaction is S-(2-succino)-L-cysteine + acetyl-CoA = N-acetyl-S-(2-succino)-L-cysteine + CoA + H(+). The protein operates within amino-acid biosynthesis; L-cysteine biosynthesis. Its function is as follows. Catalyzes the N-acetylation of S-(2-succino)cysteine. Is involved in a S-(2-succino)cysteine (2SC) degradation pathway that allows B.subtilis to grow on 2SC as a sole sulfur source, via its metabolization to cysteine. Moreover, 2SC is a toxic compound in B.subtilis at high exogenous concentrations, and this enzyme relieves 2SC toxicity via N-acetylation. The sequence is that of S-(2-succino)cysteine N-acetyltransferase from Bacillus subtilis (strain 168).